A 327-amino-acid polypeptide reads, in one-letter code: Probable cell division protein WhiA (327 aa).

A DNA-binding region (H-T-H motif) is located at residues 277–310 (EELGRLADPPMTKDAVAGRIRRLLSMADRKAKQD). The segment at 304–327 (DRKAKQDGIPDTESAVTPDLLEDA) is disordered.

It belongs to the WhiA family.

Functionally, involved in cell division and chromosome segregation. The chain is Probable cell division protein WhiA from Mycolicibacterium vanbaalenii (strain DSM 7251 / JCM 13017 / BCRC 16820 / KCTC 9966 / NRRL B-24157 / PYR-1) (Mycobacterium vanbaalenii).